The chain runs to 59 residues: Large ribosomal subunit protein bL32 (59 aa).

The interval 1–40 (MAVQQNKKSPSKRGMHRSHDFLRTTPLSVDPGTGEVHLRH) is disordered.

The protein belongs to the bacterial ribosomal protein bL32 family.

This is Large ribosomal subunit protein bL32 from Nitrosospira multiformis (strain ATCC 25196 / NCIMB 11849 / C 71).